The following is a 616-amino-acid chain: Probable Xaa-Pro aminopeptidase P (616 aa).

D413, D424, E522, and E536 together coordinate Mn(2+).

Belongs to the peptidase M24B family. It depends on Mn(2+) as a cofactor.

It carries out the reaction Release of any N-terminal amino acid, including proline, that is linked to proline, even from a dipeptide or tripeptide.. In terms of biological role, catalyzes the removal of a penultimate prolyl residue from the N-termini of peptides. The polypeptide is Probable Xaa-Pro aminopeptidase P (AMPP) (Paracoccidioides brasiliensis (strain Pb18)).